The primary structure comprises 154 residues: Aspartate carbamoyltransferase regulatory chain (154 aa).

Zn(2+) is bound by residues C109, C114, C138, and C141.

This sequence belongs to the PyrI family. As to quaternary structure, contains catalytic and regulatory chains. Zn(2+) serves as cofactor.

Involved in allosteric regulation of aspartate carbamoyltransferase. This is Aspartate carbamoyltransferase regulatory chain from Aliivibrio fischeri (strain ATCC 700601 / ES114) (Vibrio fischeri).